Reading from the N-terminus, the 799-residue chain is Zinc finger protein 227 (799 aa).

Residues 23–94 (VTFKDVAVVF…ETETQRSSKH (72 aa)) enclose the KRAB domain. 19 C2H2-type zinc fingers span residues 250 to 272 (HPCGECGRGFSYSPRLPLHPNVH), 269 to 291 (PNVHTGEKCFSQSSHLRTHQRIH), 324 to 346 (YRCDSCGKGFSSSTGLIIHYRTH), 352 to 374 (YKCEECGKCFSQSSNFQCHQRVH), 380 to 402 (YKCEECGKGFGWSVNLRVHQRVH), 408 to 430 (YKCEECGKGFTQAAHFHIHQRVH), 436 to 458 (YKCDVCGKGFSHNSPLICHRRVH), 464 to 486 (YKCEACGKGFTRNTDLHIHFRVH), 492 to 514 (YKCKECGKGFSQASNLQVHQNVH), 520 to 542 (FKCETCGKGFSQSSKLQTHQRVH), 548 to 570 (YRCDVCGKDFSYSSNLKLHQVIH), 576 to 598 (YKCEECGKGFSWRSNLHAHQRVH), 604 to 626 (YKCEQCDKSFSQAIDFRVHQRVH), 632 to 654 (YKCGVCGKGFSQSSGLQSHQRVH), 660 to 682 (YKCDVCGKGFRYSSQFIYHQRGH), 688 to 710 (YKCEECGKGFGRSLNLRHHQRVH), 716 to 738 (HICEECGKAFSLPSNLRVHLGVH), 744 to 766 (FKCEECGKGFSQSARLEAHQRVH), and 772 to 794 (YKCDICDKDFRHRSRLTYHQKVH).

It belongs to the krueppel C2H2-type zinc-finger protein family.

It localises to the nucleus. Functionally, may be involved in transcriptional regulation. This is Zinc finger protein 227 (ZNF227) from Homo sapiens (Human).